The primary structure comprises 288 residues: Thymidylate synthase (288 aa).

Residue Arg-21 participates in dUMP binding. Asn-51 lines the (6R)-5,10-methylene-5,6,7,8-tetrahydrofolate pocket. Residue 150-151 (RR) coordinates dUMP. Cys-170 functions as the Nucleophile in the catalytic mechanism. DUMP contacts are provided by residues 190-193 (RSGD), Asn-201, and 231-233 (HIY). Asp-193 is a binding site for (6R)-5,10-methylene-5,6,7,8-tetrahydrofolate. Ala-287 lines the (6R)-5,10-methylene-5,6,7,8-tetrahydrofolate pocket.

It belongs to the thymidylate synthase family. Bacterial-type ThyA subfamily. Homodimer.

The protein localises to the cytoplasm. It carries out the reaction dUMP + (6R)-5,10-methylene-5,6,7,8-tetrahydrofolate = 7,8-dihydrofolate + dTMP. The protein operates within pyrimidine metabolism; dTTP biosynthesis. In terms of biological role, catalyzes the reductive methylation of 2'-deoxyuridine-5'-monophosphate (dUMP) to 2'-deoxythymidine-5'-monophosphate (dTMP) while utilizing 5,10-methylenetetrahydrofolate (mTHF) as the methyl donor and reductant in the reaction, yielding dihydrofolate (DHF) as a by-product. This enzymatic reaction provides an intracellular de novo source of dTMP, an essential precursor for DNA biosynthesis. In Aster yellows witches'-broom phytoplasma (strain AYWB), this protein is Thymidylate synthase.